The primary structure comprises 224 residues: Protein-L-isoaspartate O-methyltransferase (224 aa).

Ser-70 is an active-site residue.

This sequence belongs to the methyltransferase superfamily. L-isoaspartyl/D-aspartyl protein methyltransferase family.

Its subcellular location is the cytoplasm. The catalysed reaction is [protein]-L-isoaspartate + S-adenosyl-L-methionine = [protein]-L-isoaspartate alpha-methyl ester + S-adenosyl-L-homocysteine. Functionally, catalyzes the methyl esterification of L-isoaspartyl residues in peptides and proteins that result from spontaneous decomposition of normal L-aspartyl and L-asparaginyl residues. It plays a role in the repair and/or degradation of damaged proteins. The sequence is that of Protein-L-isoaspartate O-methyltransferase from Cellvibrio japonicus (strain Ueda107) (Pseudomonas fluorescens subsp. cellulosa).